A 173-amino-acid polypeptide reads, in one-letter code: Crossover junction endodeoxyribonuclease RuvC (173 aa).

Catalysis depends on residues D8, E67, and D139. Residues D8, E67, and D139 each coordinate Mg(2+).

This sequence belongs to the RuvC family. As to quaternary structure, homodimer which binds Holliday junction (HJ) DNA. The HJ becomes 2-fold symmetrical on binding to RuvC with unstacked arms; it has a different conformation from HJ DNA in complex with RuvA. In the full resolvosome a probable DNA-RuvA(4)-RuvB(12)-RuvC(2) complex forms which resolves the HJ. The cofactor is Mg(2+).

It is found in the cytoplasm. It catalyses the reaction Endonucleolytic cleavage at a junction such as a reciprocal single-stranded crossover between two homologous DNA duplexes (Holliday junction).. In terms of biological role, the RuvA-RuvB-RuvC complex processes Holliday junction (HJ) DNA during genetic recombination and DNA repair. Endonuclease that resolves HJ intermediates. Cleaves cruciform DNA by making single-stranded nicks across the HJ at symmetrical positions within the homologous arms, yielding a 5'-phosphate and a 3'-hydroxyl group; requires a central core of homology in the junction. The consensus cleavage sequence is 5'-(A/T)TT(C/G)-3'. Cleavage occurs on the 3'-side of the TT dinucleotide at the point of strand exchange. HJ branch migration catalyzed by RuvA-RuvB allows RuvC to scan DNA until it finds its consensus sequence, where it cleaves and resolves the cruciform DNA. The protein is Crossover junction endodeoxyribonuclease RuvC of Salmonella choleraesuis (strain SC-B67).